Here is a 437-residue protein sequence, read N- to C-terminus: UPF0597 protein Shal_0864 (437 aa).

This sequence belongs to the UPF0597 family.

The sequence is that of UPF0597 protein Shal_0864 from Shewanella halifaxensis (strain HAW-EB4).